We begin with the raw amino-acid sequence, 77 residues long: Large ribosomal subunit protein uL29 (77 aa).

This sequence belongs to the universal ribosomal protein uL29 family.

In Mycobacterium bovis (strain ATCC BAA-935 / AF2122/97), this protein is Large ribosomal subunit protein uL29 (rpmC).